Here is a 110-residue protein sequence, read N- to C-terminus: Class I hydrophobin 2 (110 aa).

Positions 1–19 (MFARAASVFVLSLPILATA) are cleaved as a signal peptide. 4 disulfides stabilise this stretch: Cys29–Cys89, Cys36–Cys83, Cys37–Cys70, and Cys90–Cys103.

This sequence belongs to the fungal hydrophobin family. In terms of assembly, self-assembles to form functional amyloid fibrils called rodlets. Self-assembly into fibrillar rodlets occurs spontaneously at hydrophobic:hydrophilic interfaces and the rodlets further associate laterally to form amphipathic monolayers.

The protein resides in the secreted. Its subcellular location is the cell wall. In terms of biological role, aerial growth, conidiation, and dispersal of filamentous fungi in the environment rely upon a capability of their secreting small amphipathic proteins called hydrophobins (HPBs) with low sequence identity. Class I can self-assemble into an outermost layer of rodlet bundles on aerial cell surfaces, conferring cellular hydrophobicity that supports fungal growth, development and dispersal; whereas Class II form highly ordered films at water-air interfaces through intermolecular interactions but contribute nothing to the rodlet structure. Pnh2 is a class I hydrophobin that might be involved in the attachment of the hydrophilic wall of hyphae to the hydrophobic surface of wood under inorganic phosphate (Pi)-deficient conditions and enable the mycelium to degrade efficiently the components of wood and to acquire nutrients containing Pi. The chain is Class I hydrophobin 2 from Pholiota nameko.